Reading from the N-terminus, the 210-residue chain is 7-carboxy-7-deazaguanine synthase (210 aa).

Residues 12–14 (LQG) and Arg-27 each bind substrate. A Radical SAM core domain is found at 18–210 (QAGKAAVFCR…VQTHKYLGLP (193 aa)). [4Fe-4S] cluster contacts are provided by Cys-31, Cys-46, and Cys-49. Thr-51 is a Mg(2+) binding site. Residue Thr-90 participates in substrate binding. Residues Gly-92, 133-135 (SPK), and 173-176 (QPMD) contribute to the S-adenosyl-L-methionine site. Substrate is bound at residue Pro-210.

This sequence belongs to the radical SAM superfamily. 7-carboxy-7-deazaguanine synthase family. In terms of assembly, homodimer. The cofactor is [4Fe-4S] cluster. S-adenosyl-L-methionine is required as a cofactor. Requires Mg(2+) as cofactor.

It catalyses the reaction 6-carboxy-5,6,7,8-tetrahydropterin + H(+) = 7-carboxy-7-deazaguanine + NH4(+). It functions in the pathway purine metabolism; 7-cyano-7-deazaguanine biosynthesis. Catalyzes the complex heterocyclic radical-mediated conversion of 6-carboxy-5,6,7,8-tetrahydropterin (CPH4) to 7-carboxy-7-deazaguanine (CDG), a step common to the biosynthetic pathways of all 7-deazapurine-containing compounds. This is 7-carboxy-7-deazaguanine synthase from Caulobacter vibrioides (strain ATCC 19089 / CIP 103742 / CB 15) (Caulobacter crescentus).